The following is a 295-amino-acid chain: MLTALNRYWDYLRIERQMSPHTITNYQHQLDATIKILAQQDIHSWTQVTPSVVRFILAESKKQGLKEKSLALRLSALRRFLSFLVQQGELKVNPATGISAPKQGRHLPKNMDGEQVQQLLANDSKEPIDIRDRAILELMYSSGLRLSELQGLDLNSINTRVREVRVIGKGNKERVVPFGRYASHAIQEWLKVRALFNPKDEALFVSQLGNRISHRAIQKRLETWGIRQGLNSHLNPHKLRHSFATHMLEASSDLRAVQELLGHSNLSTTQIYTHLNFQHLAEVYDQAHPRAKRKK.

The Core-binding (CB) domain occupies 1–85; sequence MLTALNRYWD…ALRRFLSFLV (85 aa). The Tyr recombinase domain maps to 106 to 285; sequence HLPKNMDGEQ…NFQHLAEVYD (180 aa). Active-site residues include Arg145, Lys169, His237, Arg240, and His263. Catalysis depends on Tyr272, which acts as the O-(3'-phospho-DNA)-tyrosine intermediate.

This sequence belongs to the 'phage' integrase family. XerC subfamily. Forms a cyclic heterotetrameric complex composed of two molecules of XerC and two molecules of XerD.

Its subcellular location is the cytoplasm. In terms of biological role, site-specific tyrosine recombinase, which acts by catalyzing the cutting and rejoining of the recombining DNA molecules. The XerC-XerD complex is essential to convert dimers of the bacterial chromosome into monomers to permit their segregation at cell division. It also contributes to the segregational stability of plasmids. This Haemophilus influenzae (strain ATCC 51907 / DSM 11121 / KW20 / Rd) protein is Tyrosine recombinase XerC (xerC).